A 177-amino-acid polypeptide reads, in one-letter code: Large ribosomal subunit protein uL5 (177 aa).

It belongs to the universal ribosomal protein uL5 family. As to quaternary structure, part of the 50S ribosomal subunit; part of the 5S rRNA/L5/L18/L25 subcomplex. Contacts the 5S rRNA and the P site tRNA. Forms a bridge to the 30S subunit in the 70S ribosome.

Its function is as follows. This is one of the proteins that bind and probably mediate the attachment of the 5S RNA into the large ribosomal subunit, where it forms part of the central protuberance. In the 70S ribosome it contacts protein S13 of the 30S subunit (bridge B1b), connecting the 2 subunits; this bridge is implicated in subunit movement. Contacts the P site tRNA; the 5S rRNA and some of its associated proteins might help stabilize positioning of ribosome-bound tRNAs. In Ehrlichia canis (strain Jake), this protein is Large ribosomal subunit protein uL5.